The primary structure comprises 153 residues: MWFSRKQAVNVAPKSTAGGAAALPKQVTTKSRGDAAESAARAYLVGAGLRWIESNYRTPGRGGGEIDLVMRVPDGTLVFVEVRQRSSASHGGAGASISAVKQRRIIFAARHYLMRFASLPPCRFDVVLVHGALSGGESPQATIEWLPAAFDAS.

The protein belongs to the UPF0102 family.

In Polaromonas naphthalenivorans (strain CJ2), this protein is UPF0102 protein Pnap_0271.